Consider the following 446-residue polypeptide: Exodeoxyribonuclease 7 large subunit (446 aa).

Belongs to the XseA family. Heterooligomer composed of large and small subunits.

Its subcellular location is the cytoplasm. It catalyses the reaction Exonucleolytic cleavage in either 5'- to 3'- or 3'- to 5'-direction to yield nucleoside 5'-phosphates.. Bidirectionally degrades single-stranded DNA into large acid-insoluble oligonucleotides, which are then degraded further into small acid-soluble oligonucleotides. In Streptococcus gordonii (strain Challis / ATCC 35105 / BCRC 15272 / CH1 / DL1 / V288), this protein is Exodeoxyribonuclease 7 large subunit.